We begin with the raw amino-acid sequence, 404 residues long: Coenzyme F420H(2) oxidase (404 aa).

The Fe cation site is built by histidine 83, glutamate 85, aspartate 87, histidine 88, histidine 151, aspartate 170, and histidine 233. The Flavodoxin-like domain occupies 259-399; the sequence is VTVIYDTMHG…ACFEAGRKLA (141 aa). Residues 265–270, 317–320, and 351–356 contribute to the FMN site; these read TMHGST, TIYD, and SMGGNG.

This sequence in the N-terminal section; belongs to the zinc metallo-hydrolase group 3 family. Homodimer. Homotetramer. The tetramer is composed of two functional dimers. FMN is required as a cofactor. Requires Fe cation as cofactor.

The catalysed reaction is 2 reduced coenzyme F420-(gamma-L-Glu)(n) + O2 = 2 oxidized coenzyme F420-(gamma-L-Glu)(n) + 2 H2O + 2 H(+). In terms of biological role, catalyzes the oxidation of F420H(2) with O(2). May be involved in O(2) detoxification, reducing the intracellular O(2) concentration to a level allowing growth at the expense of methane formation. The protein is Coenzyme F420H(2) oxidase of Methanothermobacter marburgensis (strain ATCC BAA-927 / DSM 2133 / JCM 14651 / NBRC 100331 / OCM 82 / Marburg) (Methanobacterium thermoautotrophicum).